The following is a 154-amino-acid chain: Myoglobin (154 aa).

Positions 2–148 constitute a Globin domain; sequence VLTDAEWHLV…FRKDIAAKYK (147 aa). Histidine 65 serves as a coordination point for nitrite. O2 is bound at residue histidine 65. Position 68 is a phosphothreonine (threonine 68). Histidine 94 serves as a coordination point for heme b.

Belongs to the globin family. As to quaternary structure, monomeric.

The protein localises to the cytoplasm. It localises to the sarcoplasm. It catalyses the reaction Fe(III)-heme b-[protein] + nitric oxide + H2O = Fe(II)-heme b-[protein] + nitrite + 2 H(+). The catalysed reaction is H2O2 + AH2 = A + 2 H2O. Its function is as follows. Monomeric heme protein which primary function is to store oxygen and facilitate its diffusion within muscle tissues. Reversibly binds oxygen through a pentacoordinated heme iron and enables its timely and efficient release as needed during periods of heightened demand. Depending on the oxidative conditions of tissues and cells, and in addition to its ability to bind oxygen, it also has a nitrite reductase activity whereby it regulates the production of bioactive nitric oxide. Under stress conditions, like hypoxia and anoxia, it also protects cells against reactive oxygen species thanks to its pseudoperoxidase activity. The sequence is that of Myoglobin (MB) from Balaenoptera physalus (Fin whale).